The following is a 489-amino-acid chain: Betaine aldehyde dehydrogenase (489 aa).

The K(+) site is built by Thr-26 and Asp-93. 150-152 (GAW) contacts NAD(+). Lys-162 serves as the catalytic Charge relay system. Residue 176–179 (KPSE) coordinates NAD(+). A K(+)-binding site is contributed by Val-180. 229-232 (GVET) is an NAD(+) binding site. Residue Leu-245 participates in K(+) binding. The active-site Proton acceptor is the Glu-251. Residues Gly-253, Cys-285, and Glu-386 each contribute to the NAD(+) site. Catalysis depends on Cys-285, which acts as the Nucleophile. Residue Cys-285 is modified to Cysteine sulfenic acid (-SOH). Residues Lys-456 and Gly-459 each contribute to the K(+) site. Glu-463 acts as the Charge relay system in catalysis.

Belongs to the aldehyde dehydrogenase family. Dimer of dimers. Requires K(+) as cofactor.

The catalysed reaction is betaine aldehyde + NAD(+) + H2O = glycine betaine + NADH + 2 H(+). It participates in amine and polyamine biosynthesis; betaine biosynthesis via choline pathway; betaine from betaine aldehyde: step 1/1. In terms of biological role, involved in the biosynthesis of the osmoprotectant glycine betaine. Catalyzes the irreversible oxidation of betaine aldehyde to the corresponding acid. The sequence is that of Betaine aldehyde dehydrogenase from Paraburkholderia phymatum (strain DSM 17167 / CIP 108236 / LMG 21445 / STM815) (Burkholderia phymatum).